Consider the following 414-residue polypeptide: Tryptophan synthase beta chain (414 aa).

Residues 1-26 (MVSTFSRQDQNYKNDDLNQPSKEGRF) are disordered. Positions 10-26 (QNYKNDDLNQPSKEGRF) are enriched in basic and acidic residues. The residue at position 109 (lysine 109) is an N6-(pyridoxal phosphate)lysine.

The protein belongs to the TrpB family. Tetramer of two alpha and two beta chains. Requires pyridoxal 5'-phosphate as cofactor.

The enzyme catalyses (1S,2R)-1-C-(indol-3-yl)glycerol 3-phosphate + L-serine = D-glyceraldehyde 3-phosphate + L-tryptophan + H2O. It functions in the pathway amino-acid biosynthesis; L-tryptophan biosynthesis; L-tryptophan from chorismate: step 5/5. The beta subunit is responsible for the synthesis of L-tryptophan from indole and L-serine. In Prochlorococcus marinus (strain MIT 9312), this protein is Tryptophan synthase beta chain.